We begin with the raw amino-acid sequence, 280 residues long: Probable aquaporin PIP2-8 (280 aa).

The segment at 1-21 (MAAGSGSGSNPKDYQDPPPAP) is disordered. The next 2 helical transmembrane spans lie at 36-56 (AAIA…STVI) and 70-92 (LGIA…GISG). The short motif at 96–98 (NPA) is the NPA 1 element. Helical transmembrane passes span 113–135 (RAAL…ARAM), 156–176 (SAGA…YTVF), and 192–212 (VLAP…TIPI). The short motif at 218-220 (NPA) is the NPA 2 element. Residues 236–256 (AWSHLWIFWVGPFAGAAAAMI) form a helical membrane-spanning segment.

The protein belongs to the MIP/aquaporin (TC 1.A.8) family. PIP (TC 1.A.8.11) subfamily. In terms of tissue distribution, expressed in leaves and at lower levels in roots.

Its subcellular location is the cell membrane. Functionally, aquaporins facilitate the transport of water and small neutral solutes across cell membranes. The protein is Probable aquaporin PIP2-8 (PIP2-8) of Oryza sativa subsp. japonica (Rice).